Reading from the N-terminus, the 319-residue chain is Homoserine dehydrogenase (319 aa).

NADPH-binding residues include F10, T12, V13, R40, K57, S92, S93, S114, and K116. V13 contacts NAD(+). NADP(+) contacts are provided by V13 and R40. S92 contributes to the NAD(+) binding site. S92 is an NADP(+) binding site. NADP(+) contacts are provided by S114 and K116. Na(+)-binding residues include E140, V143, A145, and T147. 2 residues coordinate NADP(+): G197 and E200. The L-homoserine site is built by E200 and D211. The active-site Proton donor is the K215. G296 provides a ligand contact to NADPH. Residue G296 participates in NAD(+) binding. G296 contributes to the NADP(+) binding site.

Belongs to the homoserine dehydrogenase family. As to quaternary structure, homodimer. Requires a metal cation as cofactor.

It catalyses the reaction L-homoserine + NAD(+) = L-aspartate 4-semialdehyde + NADH + H(+). It participates in amino-acid biosynthesis; L-methionine biosynthesis via de novo pathway; L-homoserine from L-aspartate: step 3/3. The protein operates within amino-acid biosynthesis; L-threonine biosynthesis; L-threonine from L-aspartate: step 3/5. In terms of biological role, catalyzes the conversion of L-aspartate-beta-semialdehyde (L-Asa) to L-homoserine (L-Hse), the third step in the biosynthesis of threonine and methionine from aspartate. Utilizes NADH but not NADPH as coenzyme. The polypeptide is Homoserine dehydrogenase (Pyrococcus horikoshii (strain ATCC 700860 / DSM 12428 / JCM 9974 / NBRC 100139 / OT-3)).